The chain runs to 1517 residues: uncharacterized protein (1517 aa).

Polar residues predominate over residues 1 to 13 (MNQFPNQPGNFGQ). Residues 1-26 (MNQFPNQPGNFGQNYYKPVQGSIPAN) are disordered. Residues asparagine 35, asparagine 40, and asparagine 76 are each glycosylated (N-linked (GlcNAc...) asparagine). Transmembrane regions (helical) follow at residues 231 to 251 (AIDF…AVPI), 397 to 417 (AIGL…TVWC), 510 to 530 (FVPL…KDWI), 612 to 632 (PNIV…FFAL), and 720 to 740 (VFDC…VVLL). Asparagine 917 carries an N-linked (GlcNAc...) asparagine glycan. A run of 4 helical transmembrane segments spans residues 956–976 (FVYA…VPPL), 985–1005 (VPAF…VNSE), 1051–1071 (VKLD…AFWS), and 1114–1134 (GIGF…TYLL). Asparagine 1178 is a glycosylation site (N-linked (GlcNAc...) asparagine). Residues 1261–1281 (PYALPLLDSGMVPVSTQLAIV) form a helical membrane-spanning segment. An N-linked (GlcNAc...) asparagine glycan is attached at asparagine 1321. Helical transmembrane passes span 1353–1373 (APVV…TFEV) and 1408–1428 (VVVV…PVVI).

This sequence to S.pombe SpAC22F3.04.

The protein resides in the membrane. This is an uncharacterized protein from Schizosaccharomyces pombe (strain 972 / ATCC 24843) (Fission yeast).